Here is a 130-residue protein sequence, read N- to C-terminus: MANTQYAGTGRRKVSVARVRLTPGSGKITINNRSFEEYIPAANLRAVVIQPFAVTSTDGTYDVNVNVVGGGFAGQAGATRHGIARALLQVDPDFRPALKSAGLLTRDSRMVERKKPGLKKARRASQFSKR.

The interval 105–130 is disordered; the sequence is TRDSRMVERKKPGLKKARRASQFSKR. Over residues 106 to 115 the composition is skewed to basic and acidic residues; it reads RDSRMVERKK. Residues 116–130 show a composition bias toward basic residues; it reads PGLKKARRASQFSKR.

It belongs to the universal ribosomal protein uS9 family.

In Oenococcus oeni (strain ATCC BAA-331 / PSU-1), this protein is Small ribosomal subunit protein uS9.